A 1304-amino-acid chain; its full sequence is MNNEDSLSYSFGRMMLNQQQHHHQQQNNTQVQQQQQQHTTQFNQVRFGGNYHQQHQQQQHHQQQHHQQQQQQQQQQQQQQQHPQQYISPTFSYVHNNSNTSITHGNLYDIDDNQIDNVNIIRGGNRGYYNQQQQQHQHQQQQYYHEQQQQHFNINNNNNNSNNNNNNNNNNNNNNNNNNNNNNNNNNNNNNNSSLITNSHHAQRIVSPIVNGMTSSSGSNMMINDVSFGMNGISSINGISINNGSGDIDEEDDKLLDEQQQLLQRSLERLSDGEEISFGNPNYFFHPFSERNINGLPSTNSSIVSRQQQLQQQQQKLKLKSSPSPISPFFYTQQQQQQQQQQQQQQQQQQQQQQQQQQQQQQQQQQQQNTSINGIIKIDQTPPTPQYIANPSVSPLNAPISSPVLGDIYSGNNNNNNINTNNYRQQQKLNTSTGSYQNMSFDAGVNGFNWSPSLQPDQSTSTNHTQAMLQQQQQRQQQQQQQTQNLVYLNNQQIKSTVTSNRDHWSSVVKPPPIQLQQNSMQQNPIQQQQQQQQQQQQQSLLQHQQMLQMQMQIQQQQQQQQQQQQQQQQQQNQQQNQQQNQQQNQQQNQQHYPNQHHGQHQHNQHNQHHNQHHNQSHPNHKNQHQKQNQTQQSTQQQQQQQQNVQTSTTQSPLLQQSQQPQQQQPPTSNQRQQQQHNNNTNNVTTINNQTNINIINNDSDNEELLTTVNHSKPPPNESKRGELVESPVSKQQYKHFIKQFKLKEKEGLEIAMEFAFQSLSVLPEKVHWRVYLELADLANRQNNLKLARKFYRKVTSTQPYISQGWLEYAKMEEDYGRLEKCQKILQLGLKHCPFNESLLIKGIRHEEKMDNLEGARALLSQLRDQSIYKTWRAVMEGGLLEARAGNIDVARKIFKYLMKHVPWYGPIYQEAYKLEERCEEYERAINIVEKGLFEDPKYGPLWFSALRLYEKTSHGFLQSTRNTVERARQAVSREVTWKIYFEAAQIEERSKNLTLSRAAYVKSVELCPENLLWKVWLGGSRTELNADNICIARKLVFRALEEVPSKLRSLVLLEYSRLEEYAGNINKSRRILKMAHVEARLDWKVFLESVLLEMRANNYEAAIKEAKESLKIHSGAGRLWAALIQLNQLKGVKSQLNVFKKALQFVPKSGEVWCEGARIALNNNELREARRFLEFAIQFTPQFGDSFIELLRLEIMEKGPNCDISKLEQLCINADPNYGFMWLHCTVCVLDSSRQVLRNAKKLLLEMTQPKEQYLEEKKPEYGSCWVGSDGVLSLNRVFRNDFNNMSNQEKRKALFGSDVVKP.

6 disordered regions span residues 19 to 85 (QQHH…HPQQ), 153 to 195 (NINN…NSSL), 296 to 334 (LPST…YTQQ), 447 to 477 (GFNW…QRQQ), 576 to 687 (QNQQ…VTTI), and 706 to 728 (LTTV…VESP). Composition is skewed to low complexity over residues 25–44 (QQNN…QFNQ), 52–85 (HQQH…HPQQ), and 153–194 (NINN…NNSS). A compositionally biased stretch (polar residues) spans 296 to 306 (LPSTNSSIVSR). Over residues 307-316 (QQQLQQQQQK) the composition is skewed to low complexity. Residues 448-465 (FNWSPSLQPDQSTSTNHT) are compositionally biased toward polar residues. 2 stretches are compositionally biased toward low complexity: residues 466-477 (QAMLQQQQQRQQ) and 576-597 (QNQQ…PNQH). The span at 598–625 (HGQHQHNQHNQHHNQHHNQSHPNHKNQH) shows a compositional bias: basic residues. Positions 626–687 (QKQNQTQQST…NNNTNNVTTI (62 aa)) are enriched in low complexity. TPR repeat units follow at residues 769–802 (WRVY…QPYI), 899–932 (MKHV…VEKG), 978–1011 (WKIY…CPEN), 1046–1079 (SKLR…AHVE), 1084–1111 (WKVF…KESL), 1112–1150 (KIHS…VPKS), and 1152–1184 (EVWC…TPQF).

The protein is TPR-containing protein DDB_G0280363 of Dictyostelium discoideum (Social amoeba).